A 490-amino-acid chain; its full sequence is Protein U94 (490 aa).

In terms of domain architecture, PV NS1-Nuc spans 1–210; it reads MFSIINPSDD…SHFNKKPNVK (210 aa).

The protein localises to the host nucleus. This chain is Protein U94 (U94), found in Human herpesvirus 6A (strain Uganda-1102) (HHV-6 variant A).